Reading from the N-terminus, the 523-residue chain is Cyclin-dependent kinase 17 (523 aa).

Phosphoserine is present on serine 9. The tract at residues 31 to 55 (IEESSSKDNEPIVKNGRPPTSHSMH) is disordered. Phosphoserine occurs at positions 80, 92, and 105. The segment at 103–123 (MGSDGESDQASGTSSDEVQSP) is disordered. Polar residues predominate over residues 110–123 (DQASGTSSDEVQSP). Phosphoserine occurs at positions 137, 146, 165, and 180. The Protein kinase domain occupies 192 to 473 (YIKLEKLGEG…AEEAMKHVYF (282 aa)). ATP-binding positions include 198–206 (LGEGTYATV) and lysine 221. Aspartate 313 functions as the Proton acceptor in the catalytic mechanism.

This sequence belongs to the protein kinase superfamily. CMGC Ser/Thr protein kinase family. CDC2/CDKX subfamily. Found in a complex containing CABLES1, CDK16 and TDRD7. Interacts with TDRD7. In terms of tissue distribution, brain specific. Within the brain it is concentrated in the neuronal layers of the hippocampus and olfactory bulb, which mostly consist of post-mitotic neurons.

It catalyses the reaction L-seryl-[protein] + ATP = O-phospho-L-seryl-[protein] + ADP + H(+). The catalysed reaction is L-threonyl-[protein] + ATP = O-phospho-L-threonyl-[protein] + ADP + H(+). Its function is as follows. May play a role in terminally differentiated neurons. Has a Ser/Thr-phosphorylating activity for histone H1. This is Cyclin-dependent kinase 17 (Cdk17) from Rattus norvegicus (Rat).